We begin with the raw amino-acid sequence, 221 residues long: Deoxyribose-phosphate aldolase (221 aa).

Catalysis depends on aspartate 89, which acts as the Proton donor/acceptor. Catalysis depends on lysine 151, which acts as the Schiff-base intermediate with acetaldehyde. Lysine 180 serves as the catalytic Proton donor/acceptor.

Belongs to the DeoC/FbaB aldolase family. DeoC type 1 subfamily.

The protein localises to the cytoplasm. The catalysed reaction is 2-deoxy-D-ribose 5-phosphate = D-glyceraldehyde 3-phosphate + acetaldehyde. The protein operates within carbohydrate degradation; 2-deoxy-D-ribose 1-phosphate degradation; D-glyceraldehyde 3-phosphate and acetaldehyde from 2-deoxy-alpha-D-ribose 1-phosphate: step 2/2. Catalyzes a reversible aldol reaction between acetaldehyde and D-glyceraldehyde 3-phosphate to generate 2-deoxy-D-ribose 5-phosphate. In Mesomycoplasma hyopneumoniae (strain J / ATCC 25934 / NCTC 10110) (Mycoplasma hyopneumoniae), this protein is Deoxyribose-phosphate aldolase.